The following is a 286-amino-acid chain: MPIDLDVALGAQLPPVEFSWTSTDVQLYQLGLGAGSDPMNPRELSYLADDTPQVLPTFGNVAATFHLTTPPTVQFPGIDIELSKVLHASERVEVPAPLPPSGSARAVTRFTDIWDKGKAAVICSETTATTPDGLLLWTQKRSIYARGEGGFGGKRGPSGSDVAPERAPDLQVAMPILPQQALLYRLCGDRNPLHSDPEFAAAAGFPRPILHGLCTYGMTCKAIVDALLDSDATAVAGYGARFAGVAYPGETLTVNVWKDGRRLVASVVAPTRDNAVVLSGVELVPA.

One can recognise a MaoC-like domain in the interval 163 to 271 (APERAPDLQV…RLVASVVAPT (109 aa)). Catalysis depends on residues D189 and H194.

It belongs to the enoyl-CoA hydratase/isomerase family. As to quaternary structure, homodimer.

The enzyme catalyses (22E)-3-oxochola-4,22-dien-24-oyl-CoA + H2O = (22S)-hydroxy-3-oxo-chol-4-ene-24-oyl-CoA. Its pathway is steroid metabolism; cholesterol degradation. Functionally, degradation of the cholesterol side chain involves 3 multistep beta-oxidation cycles, this is involved in the second cycle. Hydrates bulky steroid enoyl-CoA esters, has highest activity with 3-OCDO-CoA (3-oxochol-4,22-dien-24-oyl-CoA) making (22S)-HOCO-CoA, followed by octenoyl-CoA, with weaker activity on 3-OCDS-CoA (3-oxocholest-4,24-dien-26-oyl-CoA) and none on 3-OPDC-CoA (3-oxo-pregna-4,17-diene-20- carboxyl-CoA). Hydrates the same substrate as EchA19, but the 2 enzymes make different stereoisomers of the product. This Mycobacterium tuberculosis (strain ATCC 25618 / H37Rv) protein is Enoyl-CoA hydratase ChsH3.